The following is a 315-amino-acid chain: Ribosomal protein L11 methyltransferase (315 aa).

S-adenosyl-L-methionine-binding residues include T162, G183, D205, and N248.

Belongs to the methyltransferase superfamily. PrmA family.

It localises to the cytoplasm. It carries out the reaction L-lysyl-[protein] + 3 S-adenosyl-L-methionine = N(6),N(6),N(6)-trimethyl-L-lysyl-[protein] + 3 S-adenosyl-L-homocysteine + 3 H(+). Functionally, methylates ribosomal protein L11. The polypeptide is Ribosomal protein L11 methyltransferase (Oceanobacillus iheyensis (strain DSM 14371 / CIP 107618 / JCM 11309 / KCTC 3954 / HTE831)).